We begin with the raw amino-acid sequence, 42 residues long: Delta-hexatoxin-Hv1a (42 aa).

4 cysteine pairs are disulfide-bonded: Cys-1–Cys-15, Cys-8–Cys-20, Cys-14–Cys-31, and Cys-16–Cys-42.

It belongs to the neurotoxin 06 (delta-actx) family. Expressed by the venom gland.

The protein resides in the secreted. Its function is as follows. Inhibits tetrodotoxin-sensitive voltage-gated sodium channels (Nav) by binding to site 3. Slows the inactivation, and causes a prolongation of action potential duration resulting in repetitive firing in autonomic and motor nerve fibers. Does not depolarize the resting potential. Does not affect tetrodotoxin-resistant sodium channels. This lethal neurotoxin is active on both insect and mammalian voltage-gated sodium channels. Pan-neuronal expression in Drosophila is lethal but flies engineered to express the toxin only in pacemaker neurons have profound defects in circadian rhythm but a normal lifespan. In Hadronyche versuta (Blue mountains funnel-web spider), this protein is Delta-hexatoxin-Hv1a.